A 215-amino-acid polypeptide reads, in one-letter code: Large ribosomal subunit protein bL25 (215 aa).

The tract at residues 174–215 is disordered; that stretch reads ETVVTVQPPATEKEEETEAAVTDSEPEVINEKEEPAEEAKEE. The span at 186-215 shows a compositional bias: acidic residues; that stretch reads KEEETEAAVTDSEPEVINEKEEPAEEAKEE.

The protein belongs to the bacterial ribosomal protein bL25 family. CTC subfamily. In terms of assembly, part of the 50S ribosomal subunit; part of the 5S rRNA/L5/L18/L25 subcomplex. Contacts the 5S rRNA. Binds to the 5S rRNA independently of L5 and L18.

This is one of the proteins that binds to the 5S RNA in the ribosome where it forms part of the central protuberance. This Halalkalibacterium halodurans (strain ATCC BAA-125 / DSM 18197 / FERM 7344 / JCM 9153 / C-125) (Bacillus halodurans) protein is Large ribosomal subunit protein bL25.